Reading from the N-terminus, the 699-residue chain is Catalase-peroxidase (699 aa).

The tryptophyl-tyrosyl-methioninium (Trp-Tyr) (with M-226) cross-link spans 72-200; sequence WHSAGTYRIA…LAAVMMGLIY (129 aa). Catalysis depends on His73, which acts as the Proton acceptor. The tryptophyl-tyrosyl-methioninium (Tyr-Met) (with W-72) cross-link spans 200-226; sequence YVNPEGVDGNPDPLKTAKDMRVTFARM. Residue His241 coordinates heme b.

Belongs to the peroxidase family. Peroxidase/catalase subfamily. In terms of assembly, homodimer or homotetramer. Heme b serves as cofactor. Post-translationally, formation of the three residue Trp-Tyr-Met cross-link is important for the catalase, but not the peroxidase activity of the enzyme.

It carries out the reaction H2O2 + AH2 = A + 2 H2O. It catalyses the reaction 2 H2O2 = O2 + 2 H2O. Functionally, bifunctional enzyme with both catalase and broad-spectrum peroxidase activity. This chain is Catalase-peroxidase, found in Aeromonas salmonicida (strain A449).